The chain runs to 448 residues: Glutamate--tRNA ligase (448 aa).

The 'HIGH' region motif lies at 10–20 (PSPTGFLHIGN). Positions 214–218 (KLSKR) match the 'KMSKS' region motif. Residue Lys-217 participates in ATP binding.

Belongs to the class-I aminoacyl-tRNA synthetase family. Glutamate--tRNA ligase type 1 subfamily. As to quaternary structure, monomer.

Its subcellular location is the cytoplasm. It carries out the reaction tRNA(Glu) + L-glutamate + ATP = L-glutamyl-tRNA(Glu) + AMP + diphosphate. Its function is as follows. Catalyzes the attachment of glutamate to tRNA(Glu) in a two-step reaction: glutamate is first activated by ATP to form Glu-AMP and then transferred to the acceptor end of tRNA(Glu). This is Glutamate--tRNA ligase from Phytoplasma australiense.